The following is a 352-amino-acid chain: Probable dual-specificity RNA methyltransferase RlmN (352 aa).

Glu-93 functions as the Proton acceptor in the catalytic mechanism. In terms of domain architecture, Radical SAM core spans 99–333 (FNYGYSVCVT…IRLERGSSID (235 aa)). Cys-106 and Cys-336 are oxidised to a cystine. Cys-113, Cys-117, and Cys-120 together coordinate [4Fe-4S] cluster. Residues 164-165 (GE), Ser-196, and Asn-295 contribute to the S-adenosyl-L-methionine site. The active-site S-methylcysteine intermediate is the Cys-336.

The protein belongs to the radical SAM superfamily. RlmN family. Requires [4Fe-4S] cluster as cofactor.

Its subcellular location is the cytoplasm. It catalyses the reaction adenosine(2503) in 23S rRNA + 2 reduced [2Fe-2S]-[ferredoxin] + 2 S-adenosyl-L-methionine = 2-methyladenosine(2503) in 23S rRNA + 5'-deoxyadenosine + L-methionine + 2 oxidized [2Fe-2S]-[ferredoxin] + S-adenosyl-L-homocysteine. It carries out the reaction adenosine(37) in tRNA + 2 reduced [2Fe-2S]-[ferredoxin] + 2 S-adenosyl-L-methionine = 2-methyladenosine(37) in tRNA + 5'-deoxyadenosine + L-methionine + 2 oxidized [2Fe-2S]-[ferredoxin] + S-adenosyl-L-homocysteine. In terms of biological role, specifically methylates position 2 of adenine 2503 in 23S rRNA and position 2 of adenine 37 in tRNAs. In Malacoplasma penetrans (strain HF-2) (Mycoplasma penetrans), this protein is Probable dual-specificity RNA methyltransferase RlmN.